The primary structure comprises 432 residues: 23S rRNA (uracil(1939)-C(5))-methyltransferase RlmD (432 aa).

In terms of domain architecture, TRAM spans Met1 to Ala54. 4 residues coordinate [4Fe-4S] cluster: Cys67, Cys73, Cys76, and Cys155. The S-adenosyl-L-methionine site is built by Gln264, Phe293, Asn298, Glu314, Asn341, and Asp362. Catalysis depends on Cys389, which acts as the Nucleophile.

It belongs to the class I-like SAM-binding methyltransferase superfamily. RNA M5U methyltransferase family. RlmD subfamily.

It carries out the reaction uridine(1939) in 23S rRNA + S-adenosyl-L-methionine = 5-methyluridine(1939) in 23S rRNA + S-adenosyl-L-homocysteine + H(+). Functionally, catalyzes the formation of 5-methyl-uridine at position 1939 (m5U1939) in 23S rRNA. This Thiobacillus denitrificans (strain ATCC 25259 / T1) protein is 23S rRNA (uracil(1939)-C(5))-methyltransferase RlmD.